A 211-amino-acid chain; its full sequence is Large ribosomal subunit protein eL13 (211 aa).

Position 16 is an N6-acetyllysine (Lys-16). Ser-52, Ser-77, and Ser-106 each carry phosphoserine. Residues Lys-123 and Lys-145 each participate in a glycyl lysine isopeptide (Lys-Gly) (interchain with G-Cter in SUMO2) cross-link. Lys-174 is covalently cross-linked (Glycyl lysine isopeptide (Lys-Gly) (interchain with G-Cter in SUMO1); alternate). Glycyl lysine isopeptide (Lys-Gly) (interchain with G-Cter in SUMO2); alternate cross-links involve residues Lys-174 and Lys-177. Lys-177 carries the N6-acetyllysine; alternate modification.

Belongs to the eukaryotic ribosomal protein eL13 family. As to quaternary structure, component of the 60S large ribosomal subunit (LSU). In terms of tissue distribution, higher levels of expression in benign breast lesions than in carcinomas.

The protein localises to the cytoplasm. Component of the ribosome, a large ribonucleoprotein complex responsible for the synthesis of proteins in the cell. The small ribosomal subunit (SSU) binds messenger RNAs (mRNAs) and translates the encoded message by selecting cognate aminoacyl-transfer RNA (tRNA) molecules. The large subunit (LSU) contains the ribosomal catalytic site termed the peptidyl transferase center (PTC), which catalyzes the formation of peptide bonds, thereby polymerizing the amino acids delivered by tRNAs into a polypeptide chain. The nascent polypeptides leave the ribosome through a tunnel in the LSU and interact with protein factors that function in enzymatic processing, targeting, and the membrane insertion of nascent chains at the exit of the ribosomal tunnel. As part of the LSU, it is probably required for its formation and the maturation of rRNAs. Plays a role in bone development. The sequence is that of Large ribosomal subunit protein eL13 (RPL13) from Homo sapiens (Human).